Reading from the N-terminus, the 124-residue chain is Mitochondrial zinc maintenance protein 1, mitochondrial (124 aa).

This sequence belongs to the complex I LYR family. MZM1 subfamily. In terms of assembly, interacts with RIP1.

It localises to the mitochondrion matrix. Its function is as follows. Assembly factor required for Rieske Fe-S protein RIP1 incorporation into the cytochrome b-c1 (CIII) complex. Functions as a chaperone, binding to this subunit within the mitochondrial matrix and stabilizing it prior to its translocation and insertion into the late CIII dimeric intermediate within the mitochondrial inner membrane. Modulates the mitochondrial matrix zinc pool. The chain is Mitochondrial zinc maintenance protein 1, mitochondrial (MZM1) from Ajellomyces dermatitidis (strain ER-3 / ATCC MYA-2586) (Blastomyces dermatitidis).